We begin with the raw amino-acid sequence, 100 residues long: Urease subunit gamma (100 aa).

This sequence belongs to the urease gamma subunit family. As to quaternary structure, heterotrimer of UreA (gamma), UreB (beta) and UreC (alpha) subunits. Three heterotrimers associate to form the active enzyme.

The protein resides in the cytoplasm. The catalysed reaction is urea + 2 H2O + H(+) = hydrogencarbonate + 2 NH4(+). It functions in the pathway nitrogen metabolism; urea degradation; CO(2) and NH(3) from urea (urease route): step 1/1. The protein is Urease subunit gamma of Halalkalibacterium halodurans (strain ATCC BAA-125 / DSM 18197 / FERM 7344 / JCM 9153 / C-125) (Bacillus halodurans).